A 409-amino-acid chain; its full sequence is Elongation factor Tu (409 aa).

One can recognise a tr-type G domain in the interval 10 to 214 (KPHVNVGTIG…AVDSYIPTPE (205 aa)). Residues 19 to 26 (GHVDHGKT) are G1. 19 to 26 (GHVDHGKT) is a GTP binding site. T26 provides a ligand contact to Mg(2+). The segment at 60–64 (GITIN) is G2. The interval 81–84 (DCPG) is G3. GTP is bound by residues 81-85 (DCPGH) and 136-139 (NKAD). The G4 stretch occupies residues 136–139 (NKAD). Residues 174–176 (SAL) form a G5 region.

The protein belongs to the TRAFAC class translation factor GTPase superfamily. Classic translation factor GTPase family. EF-Tu/EF-1A subfamily. Monomer.

It localises to the cytoplasm. It catalyses the reaction GTP + H2O = GDP + phosphate + H(+). Functionally, GTP hydrolase that promotes the GTP-dependent binding of aminoacyl-tRNA to the A-site of ribosomes during protein biosynthesis. The protein is Elongation factor Tu of Synechococcus sp. (strain JA-2-3B'a(2-13)) (Cyanobacteria bacterium Yellowstone B-Prime).